The primary structure comprises 64 residues: Large ribosomal subunit protein bL35 (64 aa).

The segment at 1–28 is disordered; the sequence is MPKVKTKSGAKKRFKLTGSGKIKRKSAY.

This sequence belongs to the bacterial ribosomal protein bL35 family.

This Cytophaga hutchinsonii (strain ATCC 33406 / DSM 1761 / CIP 103989 / NBRC 15051 / NCIMB 9469 / D465) protein is Large ribosomal subunit protein bL35.